A 678-amino-acid polypeptide reads, in one-letter code: MEELVGLREGSSGNPVALRELWSPCPRLRRGIRGGLEWLKQKLFRVGEDWYFLMTLGVLMALISYAMNFALGRVVRAHKWLYREIGDSHLLRYLSWTVYPVALVSFSSGFSQSITPFSGGSGIPELKTILSGVVLENYLDIKNFGAKVVGLSCTLATGSTLFLGKVGPFVHLSVMIAAYLGRVRTKTIGEAENKSKQNEMLVAGAAVGVATVFAAPFSGVLFCIEVMSSHFSVWDYWRGFFAATCGAFMFRLLAVFNSEQETITSLYKTSFPVDVPFDLPEIFFFVLLGAICGVASCAYLYCQRTFLAFTKTNKLISKLMATSKPLYAALAATVLASITYPPGVGRFMASRLSMREHLDTLFDNHSWALLTRNSSPPWPAEPDPQHLWWEWYHPRFTIFGTLAFFLVMKFWMLILATTIPMPAGYFLPIFIIGAAIGRLLGEALSVAFPEGIVAGGVINPIMPGGYALAGAAAFSGAVTHSISTALLAFELTGQIVHALPVLMAVLAANAIAQSCQPSFYDGTIMVKKLPYLPWIRGRPINSHRVIVEHFMRRAISTLARDAALEQVVKVLTSTDEAEYPLVESTESQLLVGIVQRAQLVQALQAEAPARASGQQRCLQDILAGGCPTEPVTLTLSPETSLHQAHNLFELLNLRSLYVTSKGRAVVYVSWVERQHTGF.

The Cytoplasmic portion of the chain corresponds to methionine 1–tryptophan 50. 2 helical membrane passes run tyrosine 51–tyrosine 82 and leucine 91–serine 111. The segment at residues proline 116–lysine 127 is an intramembrane region (helical). Serine 121 provides a ligand contact to chloride. 2 consecutive transmembrane segments (helical) span residues isoleucine 141–threonine 160 and leucine 161–leucine 180. The segment at residues alanine 203 to isoleucine 224 is an intramembrane region (helical). The chain crosses the membrane as a helical span at residues tyrosine 236–valine 255. Ca(2+) is bound by residues glutamate 259, glutamate 261, aspartate 278, and glutamate 281. Helical transmembrane passes span isoleucine 282–threonine 310 and proline 325–proline 342. An intramembrane region (helical) is located at residues alanine 349–threonine 360. The N-linked (GlcNAc...) asparagine glycan is linked to asparagine 364. The next 2 helical transmembrane spans lie at glycine 400 to proline 420 and methionine 421 to leucine 440. Residue phenylalanine 426 coordinates chloride. The helical intramembrane region spans glycine 464–valine 496. A helical transmembrane segment spans residues proline 500–tyrosine 520. Over aspartate 521 to phenylalanine 678 the chain is Cytoplasmic. CBS domains are found at residues methionine 551 to serine 612 and aspartate 620 to phenylalanine 678.

This sequence belongs to the chloride channel (TC 2.A.49) family. CLCNKB subfamily. In terms of assembly, homodimer. Interacts with BSND. N-glycosylated. Expressed predominantly in the kidney.

The protein localises to the basolateral cell membrane. It catalyses the reaction chloride(in) = chloride(out). The enzyme catalyses iodide(out) = iodide(in). The catalysed reaction is nitrate(in) = nitrate(out). It carries out the reaction bromide(in) = bromide(out). In terms of biological role, anion-selective channel permeable to small monovalent anions with ion selectivity for chloride &gt; bromide &gt; nitrate &gt; iodide. Forms a homodimeric channel where each subunit has its own ion conduction pathway. May conduct double-barreled currents controlled by two types of gates, two fast gates that control each subunit independently and a slow common gate that opens and shuts off both subunits simultaneously. Assembles with the regulatory subunit BSND/Barttin for sorting at the basolateral plasma membrane domain and functional switch to the ion conducting state. CLCNKB:BSND channels display mostly a linear current-voltage relationship controlled by common gate. Mediates chloride conductance along nephron segments, namely the thick ascending limb of Henle's loop, convoluted tubule and the collecting duct, contributing to the maintenance of systemic acid-base and electrolyte homeostasis. Conducts chloride currents in the stria vascularis of the inner ear to establish the endocochlear potential necessary for normal hearing. The polypeptide is Chloride channel protein ClC-Kb (CLCNKB) (Oryctolagus cuniculus (Rabbit)).